We begin with the raw amino-acid sequence, 427 residues long: Glucan 1,3-beta-glucosidase 2 (427 aa).

A signal peptide spans 1 to 17 (MLISTFIISSLLSIALA). Residue Glu217 is the Proton donor of the active site. 2 disulfide bridges follow: Cys299–Cys426 and Cys324–Cys355. Glu316 functions as the Nucleophile in the catalytic mechanism.

Belongs to the glycosyl hydrolase 5 (cellulase A) family.

It localises to the secreted. The enzyme catalyses Successive hydrolysis of beta-D-glucose units from the non-reducing ends of (1-&gt;3)-beta-D-glucans, releasing alpha-glucose.. Its function is as follows. Beta-glucanases participate in the metabolism of beta-glucan, the main structural component of the cell wall. It could also function biosynthetically as a transglycosylase. This chain is Glucan 1,3-beta-glucosidase 2 (EXG2), found in Wickerhamomyces anomalus (Yeast).